The following is a 273-amino-acid chain: Dermonecrotic toxin LhSicTox-alphaIA1iii (273 aa).

His5 is a catalytic residue. Mg(2+) is bound by residues Glu25 and Asp27. His41 serves as the catalytic Nucleophile. Disulfide bonds link Cys45-Cys51 and Cys47-Cys190. Asp85 contacts Mg(2+).

This sequence belongs to the arthropod phospholipase D family. Class II subfamily. The cofactor is Mg(2+). Expressed by the venom gland.

The protein resides in the secreted. The catalysed reaction is an N-(acyl)-sphingosylphosphocholine = an N-(acyl)-sphingosyl-1,3-cyclic phosphate + choline. It catalyses the reaction an N-(acyl)-sphingosylphosphoethanolamine = an N-(acyl)-sphingosyl-1,3-cyclic phosphate + ethanolamine. The enzyme catalyses a 1-acyl-sn-glycero-3-phosphocholine = a 1-acyl-sn-glycero-2,3-cyclic phosphate + choline. It carries out the reaction a 1-acyl-sn-glycero-3-phosphoethanolamine = a 1-acyl-sn-glycero-2,3-cyclic phosphate + ethanolamine. Dermonecrotic toxins cleave the phosphodiester linkage between the phosphate and headgroup of certain phospholipids (sphingolipid and lysolipid substrates), forming an alcohol (often choline) and a cyclic phosphate. This toxin acts on sphingomyelin (SM). It may also act on ceramide phosphoethanolamine (CPE), lysophosphatidylcholine (LPC) and lysophosphatidylethanolamine (LPE), but not on lysophosphatidylserine (LPS), and lysophosphatidylglycerol (LPG). It acts by transphosphatidylation, releasing exclusively cyclic phosphate products as second products. Induces dermonecrosis, hemolysis, increased vascular permeability, edema, inflammatory response, and platelet aggregation. This Loxosceles hirsuta (Recluse spider) protein is Dermonecrotic toxin LhSicTox-alphaIA1iii.